Consider the following 386-residue polypeptide: MSLKDFIFTSESVGEGHPDKVCDQISDAILDAYLEQDPKSRVACETLATTNLVVIAGEITSKGKVDAQEIARNVIRDIGYNDITMGFDADFAVVSAHVHAQSPDISQGVTEGEGLFKEQGAGDQGLMFGFAINETPEFMPMPIYYSHELVKHLAGLRHSNKLKFLRPDAKSQVTVEYKDGKPVRVDTVVISTQHSPDVAHKQIEESLIEECIKKVIPANLLVNTKYFINPTGQFIVGGPHGDAGLTGRKIIVDTYGGYGRHGGGAFSGKDPSKVDRSAAYMGRYIAKNVVASGLADKCEVQLAYAIGVAEPVSVHVDTFGTGKISEEELVKRIRANFKLTPRGIIESLKLLEKGRKYRETASYGHFGRKGSTFTWEKTDKTVALKG.

An ATP-binding site is contributed by His-17. Mg(2+) is bound at residue Asp-19. K(+) is bound at residue Glu-45. L-methionine is bound by residues Glu-58 and Gln-101. The segment at Gln-101–Glu-111 is flexible loop. Residues Asp-168–Lys-170, Asp-242, Arg-248–Lys-249, Ala-265, and Lys-269 each bind ATP. L-methionine is bound at residue Asp-242. Residue Lys-273 coordinates L-methionine.

The protein belongs to the AdoMet synthase family. Homotetramer; dimer of dimers. Mg(2+) is required as a cofactor. It depends on K(+) as a cofactor.

Its subcellular location is the cytoplasm. The enzyme catalyses L-methionine + ATP + H2O = S-adenosyl-L-methionine + phosphate + diphosphate. It participates in amino-acid biosynthesis; S-adenosyl-L-methionine biosynthesis; S-adenosyl-L-methionine from L-methionine: step 1/1. In terms of biological role, catalyzes the formation of S-adenosylmethionine (AdoMet) from methionine and ATP. The overall synthetic reaction is composed of two sequential steps, AdoMet formation and the subsequent tripolyphosphate hydrolysis which occurs prior to release of AdoMet from the enzyme. The protein is S-adenosylmethionine synthase of Leptospira borgpetersenii serovar Hardjo-bovis (strain JB197).